The following is a 482-amino-acid chain: Cobyric acid synthase (482 aa).

The GATase cobBQ-type domain maps to 249-436 (QCKIACLALS…LHGLFTSDDF (188 aa)). Catalysis depends on Cys331, which acts as the Nucleophile. His428 is an active-site residue.

The protein belongs to the CobB/CobQ family. CobQ subfamily.

It participates in cofactor biosynthesis; adenosylcobalamin biosynthesis. Its function is as follows. Catalyzes amidations at positions B, D, E, and G on adenosylcobyrinic A,C-diamide. NH(2) groups are provided by glutamine, and one molecule of ATP is hydrogenolyzed for each amidation. In Bradyrhizobium diazoefficiens (strain JCM 10833 / BCRC 13528 / IAM 13628 / NBRC 14792 / USDA 110), this protein is Cobyric acid synthase.